The following is a 389-amino-acid chain: Ethanolamine-phosphate cytidylyltransferase (389 aa).

The interval 1-20 (MIRNGRGAAGGAEQPGPGGR) is disordered. CTP is bound by residues 221-222 (AF), 229-232 (HVDF), lysine 259, 307-310 (HGKT), and 336-340 (SGSNL). Serine 338 is modified (phosphoserine). Threonine 341 and threonine 342 each carry phosphothreonine.

It belongs to the cytidylyltransferase family. In terms of tissue distribution, strongest expression in liver, heart, and skeletal muscle.

The enzyme catalyses phosphoethanolamine + CTP + H(+) = CDP-ethanolamine + diphosphate. The protein operates within phospholipid metabolism; phosphatidylethanolamine biosynthesis; phosphatidylethanolamine from ethanolamine: step 2/3. In terms of biological role, ethanolamine-phosphate cytidylyltransferase that catalyzes the second step in the synthesis of phosphatidylethanolamine (PE) from ethanolamine via the CDP-ethanolamine pathway. Phosphatidylethanolamine is a dominant inner-leaflet phospholipid in cell membranes, where it plays a role in membrane function by structurally stabilizing membrane-anchored proteins, and participates in important cellular processes such as cell division, cell fusion, blood coagulation, and apoptosis. This Homo sapiens (Human) protein is Ethanolamine-phosphate cytidylyltransferase (PCYT2).